A 418-amino-acid chain; its full sequence is AP-1 complex subunit mu (418 aa).

The MHD domain occupies 176–417 (NNEAYFDVTE…VTKAGKFQVR (242 aa)).

It belongs to the adaptor complexes medium subunit family. As to quaternary structure, adaptor protein complex 1 (AP-1) is a heterotetramer composed of two large adaptins (gamma- and beta'-type subunits), a medium adaptin (mu-type subunit AP47) and a small adaptin (sigma-type subunit AP19). In terms of processing, regulated by phosphorylation.

It is found in the golgi apparatus. It localises to the cytoplasmic vesicle. Its subcellular location is the clathrin-coated vesicle membrane. Functionally, component of the adapter complexes which link clathrin to receptors in coated vesicles. Clathrin-associated protein complexes are believed to interact with the cytoplasmic tails of membrane proteins, leading to their selection and concentration. AP47 is a subunit of the plasma membrane adapter. The protein is AP-1 complex subunit mu of Diplobatis ommata (Ocellated electric ray).